The following is a 486-amino-acid chain: MNNKKKNINTISIIKMNDIKNIHFIGIGGCSMGGIAEILLKSGYNISGSDIVSNNITQQLSKLGAKIFFKHTEKNINRSDVIVISSAISCNNPEIIKAKKLNIPVISRAEMIAEIIRYKYNIAISGTHGKTSTTAIIFSIFEDSNLSPTLINGGYLKSINSNIKIGKNPFYCIVEADESDASFLHLKPITIILTNIEKDHIETYNGSFHNLKLAFIKFIHNLPFYGTAIMCIDNHAVQTILPYIKRNIITYGFSSNADVRIDRYVQKKFTSRFIVIRVNKPTLNVTLNLPGRHNALNATAAICVATQENIDDKNIIQSLKNFQGVQRRFELSKTFTINSKSHRKKEIMLINDYGHHPTEILESIHTARFGWPKKKLLMIFQPHRYTRTKNFLFSFSKTLSNVDELFILEVYAANEAIIPGADSTSLYKTIKKNKKNFVTLILDLNKLFLNIMSKLSDSNLILVQGAGNVDNIVKTFFIKKLKQYKN.

An ATP-binding site is contributed by 126–132 (GTHGKTS).

It belongs to the MurCDEF family.

It is found in the cytoplasm. It catalyses the reaction UDP-N-acetyl-alpha-D-muramate + L-alanine + ATP = UDP-N-acetyl-alpha-D-muramoyl-L-alanine + ADP + phosphate + H(+). It participates in cell wall biogenesis; peptidoglycan biosynthesis. Functionally, cell wall formation. In Buchnera aphidicola subsp. Baizongia pistaciae (strain Bp), this protein is UDP-N-acetylmuramate--L-alanine ligase.